A 274-amino-acid polypeptide reads, in one-letter code: Acetylaranotin bis-thiomethyltransferase (274 aa).

This sequence belongs to the class I-like SAM-binding methyltransferase superfamily.

The protein operates within mycotoxin biosynthesis. Acetylaranotin bis-thiomethyltransferase involved in the biosynthesis of acetylaranotin derivatives, members of the epipolythiodioxopiperazine (ETP) class of toxins characterized by a disulfide-bridged cyclic dipeptide. The first step of acetylaranotin biosynthesis is performed by the NRPS ataP which produces diketopiperazine cyclo-L-Phe-L-Phe via the condensation of 2 phenylalanines (L-Phe). The ataC domain of ataTC then catalyzes the formation of bishydroxylation of cyclo-L-Phe-L-Phe. The glutathione S-transferase domain ataG in ataIMG further catalyzes the conjugation of two glutathiones to the bishydroxylated intermediate. Next, the dipeptidase ataJ removes the Glu residues. The following step is performed by the carbon sulfur lyase domain ataI of ataIMG which may convert the bis-cysteinyl adduct to yield an epidithiol intermediate. The ataT domain from ataTC then catalyzes the oxidation of the free dithiols, followed by a cyclization step catalyzed by the cytochrome P450 ataF. AtaF probably acts as an epoxidase to promote a dual epoxidation formation at C8 and C9 along with C8' and C9', followed by the spontaneous nucleophilic attack of the amide nitrogens N10 and N10' to yield an intermediate with the pyrrolidine partial structure. The final steps of acetylaranotin biosynthesis involve the acetylation and ring rearrangement of an epitetrathiodiketopiperazine intermediate to produce acetylaranotin. AtaH probably catalyzes the acetylation of epitetrathiodiketopiperazine to produce a diacetate and ataY is responsible for the formation of the dihydrooxepin moiety that converts the diacetate intermediate to acetylaranotin via acetylapoaranotin. Both enzymes could function independently in the absence of the other. The acetylaranotin bis-thiomethyltransferase ataS located outside of acetylaranotin gene cluster is the main thiomethyltransferase responsible for converting acetylaranotin and its related intermediates to their methylated forms. This chain is Acetylaranotin bis-thiomethyltransferase, found in Aspergillus terreus (strain NIH 2624 / FGSC A1156).